Here is a 287-residue protein sequence, read N- to C-terminus: Bifunctional protein FolD 2 (287 aa).

NADP(+)-binding positions include 166–168 (GAS) and Ile232.

The protein belongs to the tetrahydrofolate dehydrogenase/cyclohydrolase family. In terms of assembly, homodimer.

It carries out the reaction (6R)-5,10-methylene-5,6,7,8-tetrahydrofolate + NADP(+) = (6R)-5,10-methenyltetrahydrofolate + NADPH. The catalysed reaction is (6R)-5,10-methenyltetrahydrofolate + H2O = (6R)-10-formyltetrahydrofolate + H(+). It functions in the pathway one-carbon metabolism; tetrahydrofolate interconversion. Its function is as follows. Catalyzes the oxidation of 5,10-methylenetetrahydrofolate to 5,10-methenyltetrahydrofolate and then the hydrolysis of 5,10-methenyltetrahydrofolate to 10-formyltetrahydrofolate. In Hydrogenovibrio crunogenus (strain DSM 25203 / XCL-2) (Thiomicrospira crunogena), this protein is Bifunctional protein FolD 2.